Here is a 371-residue protein sequence, read N- to C-terminus: Cytochrome b (371 aa).

The next 4 helical transmembrane spans lie at 25–45 (FGSMLLTCLALQVLTGFFLAV), 69–90 (WMMQNLHAIGASMFFICIYIHI), 105–125 (WMSGITLLITLMATAFFGYVL), and 170–190 (FFALHFILPFAIISLSSLHVI). Positions 75 and 89 each coordinate heme b. The heme b site is built by H174 and H188. Residue H193 coordinates a ubiquinone. The next 4 helical transmembrane spans lie at 218–238 (HKDLLLLTLMMMFLFIIVSFF), 280–300 (LGGALALVMSIMILFCTPFTH), 312–332 (LSQLMFWTLVSTFITITWAAT), and 339–358 (FITISQVTSILYFTFFLSIP).

It belongs to the cytochrome b family. As to quaternary structure, the cytochrome bc1 complex contains 3 respiratory subunits (MT-CYB, CYC1 and UQCRFS1), 2 core proteins (UQCRC1 and UQCRC2) and probably 6 low-molecular weight proteins. Heme b serves as cofactor.

The protein localises to the mitochondrion inner membrane. Its function is as follows. Component of the ubiquinol-cytochrome c reductase complex (complex III or cytochrome b-c1 complex) that is part of the mitochondrial respiratory chain. The b-c1 complex mediates electron transfer from ubiquinol to cytochrome c. Contributes to the generation of a proton gradient across the mitochondrial membrane that is then used for ATP synthesis. The protein is Cytochrome b (MT-CYB) of Liasis mackloti savuensis (Savu python).